A 509-amino-acid polypeptide reads, in one-letter code: ATP synthase subunit alpha (509 aa).

Gly169–Thr176 contacts ATP.

Belongs to the ATPase alpha/beta chains family. As to quaternary structure, F-type ATPases have 2 components, CF(1) - the catalytic core - and CF(0) - the membrane proton channel. CF(1) has five subunits: alpha(3), beta(3), gamma(1), delta(1), epsilon(1). CF(0) has three main subunits: a(1), b(2) and c(9-12). The alpha and beta chains form an alternating ring which encloses part of the gamma chain. CF(1) is attached to CF(0) by a central stalk formed by the gamma and epsilon chains, while a peripheral stalk is formed by the delta and b chains.

Its subcellular location is the cell inner membrane. The enzyme catalyses ATP + H2O + 4 H(+)(in) = ADP + phosphate + 5 H(+)(out). Functionally, produces ATP from ADP in the presence of a proton gradient across the membrane. The alpha chain is a regulatory subunit. This Brucella melitensis biotype 1 (strain ATCC 23456 / CCUG 17765 / NCTC 10094 / 16M) protein is ATP synthase subunit alpha.